We begin with the raw amino-acid sequence, 238 residues long: Ribonuclease PH (238 aa).

Phosphate is bound by residues Arg86 and 124–126 (GTR).

It belongs to the RNase PH family. As to quaternary structure, homohexameric ring arranged as a trimer of dimers.

The enzyme catalyses tRNA(n+1) + phosphate = tRNA(n) + a ribonucleoside 5'-diphosphate. In terms of biological role, phosphorolytic 3'-5' exoribonuclease that plays an important role in tRNA 3'-end maturation. Removes nucleotide residues following the 3'-CCA terminus of tRNAs; can also add nucleotides to the ends of RNA molecules by using nucleoside diphosphates as substrates, but this may not be physiologically important. Probably plays a role in initiation of 16S rRNA degradation (leading to ribosome degradation) during starvation. This chain is Ribonuclease PH, found in Erwinia tasmaniensis (strain DSM 17950 / CFBP 7177 / CIP 109463 / NCPPB 4357 / Et1/99).